The primary structure comprises 1125 residues: Telomerase reverse transcriptase (1125 aa).

Residues M1 to T239 form an RNA-interacting domain 1 region. A GQ motif region spans residues V58 to L205. The tract at residues W137–L141 is required for regulating specificity for telomeric DNA and for processivity for primer elongation. The span at G206 to H216 shows a compositional bias: polar residues. Positions G206 to V304 are disordered. Positions N240–P328 are linker. The span at A247–P259 shows a compositional bias: basic and acidic residues. Low complexity predominate over residues A273–K287. Residues C306–E528 are required for oligomerization. The tract at residues F329–D540 is RNA-interacting domain 2. The TFLY; involved in RNA binding motif lies at T332 to Y337. Positions F381–R511 are QFP motif. Residues L402–T422 form a CP motif region. S447 carries the phosphoserine; by DYRK2 modification. One can recognise a Reverse transcriptase domain in the interval E595–L928. The residue at position 697 (Y697) is a Phosphotyrosine; by SRC-type Tyr-kinases. Mg(2+) contacts are provided by D702, D861, and D862. The interval L907–F921 is required for oligomerization. The segment at W923–L927 is primer grip sequence. The segment at D929–D1125 is CTE.

The protein belongs to the reverse transcriptase family. Telomerase subfamily. As to quaternary structure, catalytic component of the telomerase holoenzyme complex composed of one molecule of TERT, one molecule of WRAP53/TCAB1, two molecules of H/ACA ribonucleoprotein complex subunits DKC1, NOP10, NHP2 and GAR1, and a telomerase RNA template component (TERC). The telomerase holoenzyme complex is associated with TEP1, SMG6/EST1A and POT1. The molecular chaperone HSP90/P23 complex is required for correct assembly and stabilization of the active telomerase. Interacts directly with HSP90A and PTGES3. Interacts with HSPA1A; the interaction occurs in the absence of TERC and dissociates once the complex has formed. Interacts with RAN; the interaction promotes nuclear export of TERT. Interacts with XPO1. Interacts with PTPN11; the interaction retains TERT in the nucleus. Interacts with NCL (via RRM1 and C-terminal RRM4/Arg/Gly-rich domains); the interaction is important for nucleolar localization of TERT. Interacts with SMARCA4 (via the bromodomain); the interaction regulates Wnt-mediated signaling. Interacts with MCRS1 (isoform MCRS2); the interaction inhibits in vitro telomerase activity. Interacts with PIF1; the interaction has no effect on the elongation activity of TERT. Interacts with PML; the interaction recruits TERT to PML bodies and inhibits telomerase activity. Interacts with GNL3L. Interacts with isoform 1 and isoform 2 of NVL. Interacts with DHX36. Interacts with ATF7. In terms of processing, phosphorylation at Tyr-697 under oxidative stress leads to translocation of TERT to the cytoplasm and reduces its antiapoptotic activity. Dephosphorylated by SHP2/PTPN11 leading to nuclear retention. Phosphorylation at the G2/M phase at Ser-447 by DYRK2 promotes ubiquitination by the EDVP complex and degradation. Ubiquitinated by the EDVP complex, a E3 ligase complex following phosphorylation at Ser-447 by DYRK2. Ubiquitinated leads to proteasomal degradation. Isoform 1 and isoform 2 expressed in thymus, liver, spleen, lung, kidney and testis. High level of inactive isoform 3 in adult hippocampus, low level in heart, cortex and cerebellum.

The protein resides in the nucleus. Its subcellular location is the nucleolus. The protein localises to the nucleoplasm. It localises to the chromosome. It is found in the telomere. The protein resides in the cytoplasm. Its subcellular location is the PML body. It catalyses the reaction DNA(n) + a 2'-deoxyribonucleoside 5'-triphosphate = DNA(n+1) + diphosphate. In terms of biological role, telomerase is a ribonucleoprotein enzyme essential for the replication of chromosome termini in most eukaryotes. Active in progenitor and cancer cells. Inactive, or very low activity, in normal somatic cells. Catalytic component of the teleromerase holoenzyme complex whose main activity is the elongation of telomeres by acting as a reverse transcriptase that adds simple sequence repeats to chromosome ends by copying a template sequence within the RNA component of the enzyme. Catalyzes the RNA-dependent extension of 3'-chromosomal termini with the 6-nucleotide telomeric repeat unit, 5'-TTAGGG-3'. The catalytic cycle involves primer binding, primer extension and release of product once the template boundary has been reached or nascent product translocation followed by further extension. More active on substrates containing 2 or 3 telomeric repeats. Telomerase activity is regulated by a number of factors including telomerase complex-associated proteins, chaperones and polypeptide modifiers. Modulates Wnt signaling. Plays important roles in aging and antiapoptosis. This is Telomerase reverse transcriptase from Rattus norvegicus (Rat).